The sequence spans 835 residues: Disease resistance protein RPP13 (835 aa).

Positions 25 to 41 (MAVKEDLEELKTELTCI) form a coiled coil. Residues 144–453 (SSLRVRQLRR…AEGFIQGDEE (310 aa)) enclose the NB-ARC domain. 192–199 (GMGGLGKT) serves as a coordination point for ATP.

Belongs to the disease resistance NB-LRR family. RPP13 subfamily.

Functionally, disease resistance protein. Resistance proteins guard the plant against pathogens that contain an appropriate avirulence protein via an indirect interaction with this avirulence protein. That triggers a defense system including the hypersensitive response, which restricts the pathogen growth. In contrast to other resistance proteins, it works independently of ESD1 and NSD1 proteins and does not require the accumulation of salicylic acid, suggesting the existence of an independent signaling pathway. The specificity to avirulence proteins differs in the different cultivars. The polypeptide is Disease resistance protein RPP13 (RPP13) (Arabidopsis thaliana (Mouse-ear cress)).